We begin with the raw amino-acid sequence, 157 residues long: Snaclec 3 (157 aa).

The signal sequence occupies residues methionine 1–alanine 23. Disulfide bonds link cysteine 27–cysteine 38, cysteine 55–cysteine 153, and cysteine 128–cysteine 145. A C-type lectin domain is found at tyrosine 34–lysine 154.

This sequence belongs to the snaclec family. In terms of assembly, heterodimer; disulfide-linked. In terms of tissue distribution, expressed by the venom gland.

Its subcellular location is the secreted. Its function is as follows. Interferes with one step of hemostasis (modulation of platelet aggregation, or coagulation cascade, for example). In Bitis gabonica (Gaboon adder), this protein is Snaclec 3.